The sequence spans 380 residues: Erythronate-4-phosphate dehydrogenase (380 aa).

S45 and T66 together coordinate substrate. NAD(+)-binding positions include D146, T174, 205–207, and D231; that span reads ASR. The active site involves R207. E236 is an active-site residue. H253 serves as the catalytic Proton donor. An NAD(+)-binding site is contributed by G256. Residue Y257 coordinates substrate.

It belongs to the D-isomer specific 2-hydroxyacid dehydrogenase family. PdxB subfamily. Homodimer.

The protein resides in the cytoplasm. It carries out the reaction 4-phospho-D-erythronate + NAD(+) = (R)-3-hydroxy-2-oxo-4-phosphooxybutanoate + NADH + H(+). The protein operates within cofactor biosynthesis; pyridoxine 5'-phosphate biosynthesis; pyridoxine 5'-phosphate from D-erythrose 4-phosphate: step 2/5. Its function is as follows. Catalyzes the oxidation of erythronate-4-phosphate to 3-hydroxy-2-oxo-4-phosphonooxybutanoate. The protein is Erythronate-4-phosphate dehydrogenase of Pseudomonas putida (strain ATCC 700007 / DSM 6899 / JCM 31910 / BCRC 17059 / LMG 24140 / F1).